Here is a 444-residue protein sequence, read N- to C-terminus: Type VI secretion system baseplate component TssK1 (444 aa).

Forms transient higher-order structures that correlated with dynamics of sheath component TssB1. Interacts with TssA1.

Core component of the H1 type VI (H1-T6SS) secretion system that plays a role in the release of toxins targeting both eukaryotic and prokaryotic species. Functions as a spatio-temporal marker for assembly of contractile apparatus made of TssB1 and TssC1. This role in assembly depends on TssM1. The polypeptide is Type VI secretion system baseplate component TssK1 (Pseudomonas aeruginosa (strain ATCC 15692 / DSM 22644 / CIP 104116 / JCM 14847 / LMG 12228 / 1C / PRS 101 / PAO1)).